The primary structure comprises 134 residues: MALYEHVFLARQDVTSQQVESMIDTYKGVIEANGGKVEKTEMWGVKSLAYRIKKNRKAHFTLLNIDAPPAALAEMERQMRISEDILRFLTIRVEALETEPSAMMQKRDRDERKDRERGRRRDEDGFSGDRNEEN.

The disordered stretch occupies residues 99-134 (EPSAMMQKRDRDERKDRERGRRRDEDGFSGDRNEEN). Over residues 105–134 (QKRDRDERKDRERGRRRDEDGFSGDRNEEN) the composition is skewed to basic and acidic residues.

It belongs to the bacterial ribosomal protein bS6 family.

Functionally, binds together with bS18 to 16S ribosomal RNA. The protein is Small ribosomal subunit protein bS6 of Methylobacterium nodulans (strain LMG 21967 / CNCM I-2342 / ORS 2060).